The sequence spans 149 residues: Large ribosomal subunit protein bL9 (149 aa).

The protein belongs to the bacterial ribosomal protein bL9 family.

In terms of biological role, binds to the 23S rRNA. This Clostridioides difficile (strain 630) (Peptoclostridium difficile) protein is Large ribosomal subunit protein bL9.